The sequence spans 172 residues: Signal peptidase complex catalytic subunit SEC11 (172 aa).

Over 1–15 (MVNFGAQSIRQTLVQ) the chain is Cytoplasmic. Residues 16 to 36 (LLGFAAIFTSSYMFYKGLSIV) form a helical; Signal-anchor for type II membrane protein membrane-spanning segment. The Lumenal segment spans residues 37–172 (ANSESPLVVV…TGLLAFIQGE (136 aa)). Residues Ser-50, His-89, and Asp-114 each act as charge relay system in the active site. The tract at residues 158–169 (GLLGITGLLAFI) is C-terminal short (CTS) helix.

The protein belongs to the peptidase S26B family. As to quaternary structure, component of the signal peptidase complex (SPC) composed of a catalytic subunit SEC11 and three accessory subunits SPC1, SPC2 and SPC3. The complex induces a local thinning of the ER membrane which is used to measure the length of the signal peptide (SP) h-region of protein substrates. This ensures the selectivity of the complex towards h-regions shorter than 18-20 amino acids. SPC associates with the translocon complex.

It localises to the endoplasmic reticulum membrane. It catalyses the reaction Cleavage of hydrophobic, N-terminal signal or leader sequences from secreted and periplasmic proteins.. Functionally, catalytic component of the signal peptidase complex (SPC) which catalyzes the cleavage of N-terminal signal sequences from nascent proteins as they are translocated into the lumen of the endoplasmic reticulum. Specifically cleaves N-terminal signal peptides that contain a hydrophobic alpha-helix (h-region) shorter than 18-20 amino acids. This chain is Signal peptidase complex catalytic subunit SEC11 (SEC11), found in Yarrowia lipolytica (strain CLIB 122 / E 150) (Yeast).